Consider the following 353-residue polypeptide: Ribosomal RNA small subunit methyltransferase H (353 aa).

S-adenosyl-L-methionine contacts are provided by residues 49–51, Asp68, Phe95, Asp126, and Gln133; that span reads GGH.

The protein belongs to the methyltransferase superfamily. RsmH family.

The protein localises to the cytoplasm. The enzyme catalyses cytidine(1402) in 16S rRNA + S-adenosyl-L-methionine = N(4)-methylcytidine(1402) in 16S rRNA + S-adenosyl-L-homocysteine + H(+). Its function is as follows. Specifically methylates the N4 position of cytidine in position 1402 (C1402) of 16S rRNA. This chain is Ribosomal RNA small subunit methyltransferase H, found in Corynebacterium urealyticum (strain ATCC 43042 / DSM 7109).